Reading from the N-terminus, the 813-residue chain is G-type lectin S-receptor-like serine/threonine-protein kinase LECRK1 (813 aa).

A signal peptide spans 1 to 19 (MVALLLFPMLLQLLSPTCA). Topologically, residues 20 to 466 (QTQKNITLGS…NRKHWVLGSS (447 aa)) are extracellular. The region spanning 22-149 (QKNITLGSTL…DGTTKWQTFD (128 aa)) is the Bulb-type lectin domain. Residues Asn24, Asn57, Asn164, Asn168, Asn219, and Asn242 are each glycosylated (N-linked (GlcNAc...) asparagine). Positions 293-346 (PQNICHAIVSDVGSGVCGFNSYCTFDGTRNQIASCQCPPWYKFFDEQKKYKGCK) constitute an EGF-like; atypical domain. 5 disulfides stabilise this stretch: Cys297-Cys315, Cys309-Cys327, Cys329-Cys345, Cys391-Cys413, and Cys395-Cys401. The PAN domain maps to 354 to 433 (CDLEEATALA…NMADYVQRTV (80 aa)). Residues Asn407 and Asn441 are each glycosylated (N-linked (GlcNAc...) asparagine). The chain crosses the membrane as a helical span at residues 467–487 (LILGTSILVNFALISIFLFGT). Over 488–813 (YCRITTKKNI…DPCSFISSLP (326 aa)) the chain is Cytoplasmic. The region spanning 523–797 (AGFHEILGAG…KVTQMLDGAV (275 aa)) is the Protein kinase domain. ATP contacts are provided by residues 529 to 537 (LGAGASGVV) and Lys553. Asp647 functions as the Proton acceptor in the catalytic mechanism.

This sequence belongs to the protein kinase superfamily. Ser/Thr protein kinase family. As to quaternary structure, interacts (via kinase domain) with ADF4. As to expression, expressed in plumules, radicles and panicles.

It localises to the membrane. The catalysed reaction is L-seryl-[protein] + ATP = O-phospho-L-seryl-[protein] + ADP + H(+). It carries out the reaction L-threonyl-[protein] + ATP = O-phospho-L-threonyl-[protein] + ADP + H(+). Involved in innate immunity. Required for the expression of defense-related genes PR1A, LOX2 and CHS1 upon biotic stresses. Required for basal resistance to the fungal blast (M.grisea), bacterial blight (O.oryzae pv. oryzae, Xoo) and the herbivorous insect brown planthopper (N.lugens, BPH). May be involved in several defense signaling pathways. Involved in the promotion of seed germination. Required for the expression of alpha-amylase genes during seed germination. Involved in resistance against the brown planthopper (BPH). Member of the BPH3 (BPH resistance locus 3) cluster which contains LECRK1, LECRK2 and LECRK3. In Oryza sativa subsp. indica (Rice), this protein is G-type lectin S-receptor-like serine/threonine-protein kinase LECRK1.